Here is a 146-residue protein sequence, read N- to C-terminus: L-fucose mutarotase (146 aa).

The active-site Proton donor is the histidine 22. Substrate is bound by residues aspartate 30, arginine 109, and 131 to 133; that span reads YGN.

The protein belongs to the RbsD / FucU family. FucU mutarotase subfamily. As to quaternary structure, homodecamer.

It is found in the cytoplasm. The enzyme catalyses alpha-L-fucose = beta-L-fucose. Its pathway is carbohydrate metabolism; L-fucose metabolism. In terms of biological role, involved in the anomeric conversion of L-fucose. This chain is L-fucose mutarotase, found in Glaesserella parasuis serovar 5 (strain SH0165) (Haemophilus parasuis).